The sequence spans 138 residues: ATP synthase epsilon chain (138 aa).

Positions 89-114 are enriched in basic and acidic residues; sequence KDTAQQEWNEAQKRLDEASKSGDRQK. A disordered region spans residues 89–117; it reads KDTAQQEWNEAQKRLDEASKSGDRQKQIQ.

This sequence belongs to the ATPase epsilon chain family. In terms of assembly, F-type ATPases have 2 components, CF(1) - the catalytic core - and CF(0) - the membrane proton channel. CF(1) has five subunits: alpha(3), beta(3), gamma(1), delta(1), epsilon(1). CF(0) has three main subunits: a, b and c.

Its subcellular location is the cellular thylakoid membrane. Its function is as follows. Produces ATP from ADP in the presence of a proton gradient across the membrane. This chain is ATP synthase epsilon chain, found in Gloeothece citriformis (strain PCC 7424) (Cyanothece sp. (strain PCC 7424)).